We begin with the raw amino-acid sequence, 232 residues long: Large ribosomal subunit protein uL1 (232 aa).

This sequence belongs to the universal ribosomal protein uL1 family. In terms of assembly, part of the 50S ribosomal subunit.

Functionally, binds directly to 23S rRNA. The L1 stalk is quite mobile in the ribosome, and is involved in E site tRNA release. In terms of biological role, protein L1 is also a translational repressor protein, it controls the translation of the L11 operon by binding to its mRNA. The polypeptide is Large ribosomal subunit protein uL1 (Xylella fastidiosa (strain M23)).